We begin with the raw amino-acid sequence, 158 residues long: Ribosome maturation factor RimP (158 aa).

It belongs to the RimP family.

Its subcellular location is the cytoplasm. Its function is as follows. Required for maturation of 30S ribosomal subunits. This chain is Ribosome maturation factor RimP, found in Streptococcus suis (strain 05ZYH33).